The following is a 382-amino-acid chain: Dual-specificity RNA methyltransferase RlmN (382 aa).

Catalysis depends on Glu-113, which acts as the Proton acceptor. The Radical SAM core domain occupies 119–358 (EINRATLCIS…TTIRKQRGID (240 aa)). Cys-126 and Cys-363 are disulfide-bonded. [4Fe-4S] cluster contacts are provided by Cys-133, Cys-137, and Cys-140. S-adenosyl-L-methionine contacts are provided by residues 187–188 (GE), Ser-219, 241–243 (SLH), and Asn-320. The active-site S-methylcysteine intermediate is Cys-363.

Belongs to the radical SAM superfamily. RlmN family. [4Fe-4S] cluster serves as cofactor.

The protein localises to the cytoplasm. The enzyme catalyses adenosine(2503) in 23S rRNA + 2 reduced [2Fe-2S]-[ferredoxin] + 2 S-adenosyl-L-methionine = 2-methyladenosine(2503) in 23S rRNA + 5'-deoxyadenosine + L-methionine + 2 oxidized [2Fe-2S]-[ferredoxin] + S-adenosyl-L-homocysteine. It catalyses the reaction adenosine(37) in tRNA + 2 reduced [2Fe-2S]-[ferredoxin] + 2 S-adenosyl-L-methionine = 2-methyladenosine(37) in tRNA + 5'-deoxyadenosine + L-methionine + 2 oxidized [2Fe-2S]-[ferredoxin] + S-adenosyl-L-homocysteine. In terms of biological role, specifically methylates position 2 of adenine 2503 in 23S rRNA and position 2 of adenine 37 in tRNAs. m2A2503 modification seems to play a crucial role in the proofreading step occurring at the peptidyl transferase center and thus would serve to optimize ribosomal fidelity. This is Dual-specificity RNA methyltransferase RlmN from Wigglesworthia glossinidia brevipalpis.